A 128-amino-acid polypeptide reads, in one-letter code: MESKEERALNNLIVENVNQENDEKDEKEQVANKGEPLALPLNVSEYCVPRGNRRRFRVRQPILQYRWDIMHRLGEPQARMREENMERIGEEVRQLMEKLREKQLSHSLRAVSTDPPHHDHHDEFCLMP.

Residue Arg50 is modified to Omega-N-methylarginine. The disordered stretch occupies residues 107-128 (SLRAVSTDPPHHDHHDEFCLMP). The segment covering 115-128 (PPHHDHHDEFCLMP) has biased composition (basic and acidic residues). Residues 117–121 (HHDHH) are his cluster. Cys125 contributes to the Zn(2+) binding site.

This sequence belongs to the BEX family. In terms of assembly, interacts with LMO2, possibly leading to regulate the transcriptional activity of a DNA-binding complex containing LMO2. Interacts with OMP. In terms of tissue distribution, expressed in central nervous system, with high level in pituitary, cerebellum and temporal lobe. Widely expressed in breast cancer cell lines.

It is found in the cytoplasm. Its subcellular location is the nucleus. Its function is as follows. Regulator of mitochondrial apoptosis and G1 cell cycle in breast cancer. Protects the breast cancer cells against mitochondrial apoptosis and this effect is mediated through the modulation of BCL2 protein family, which involves the positive regulation of anti-apoptotic member BCL2 and the negative regulation of pro-apoptotic members BAD, BAK1 and PUMA. Required for the normal cell cycle progression during G1 in breast cancer cells through the regulation of CCND1 and CDKN1A. Regulates the level of PP2A regulatory subunit B and PP2A phosphatase activity. In absence of reductive stress, acts as a pseudosubstrate for the CRL2(FEM1B) complex: associates with FEM1B via zinc, thereby preventing association between FEM1B and its substrates. The chain is Protein BEX2 (BEX2) from Homo sapiens (Human).